The following is a 164-amino-acid chain: MGIIISLVAPTVSSTISSRLMIGPENNEKDAKNSDRTKYDNLAMLGRSPEQKEHVNPFEKAPVARPTRNTVDSQMMLGPPKKANDQSASDCSIYDNLVVPMSELGPTPGNKPSPNPIEGAPMIRPPQDTVSRAPDNSIYDTLQMTPEVDWSKKMTMKSMKKTGK.

Positions 46 to 142 (GRSPEQKEHV…APDNSIYDTL (97 aa)) are disordered.

This is an uncharacterized protein from Caenorhabditis elegans.